The chain runs to 155 residues: Myelin basic protein (155 aa).

Disordered regions lie at residues 1 to 70 (MASA…GRQT) and 109 to 155 (TDGQ…PARR). Ala2 is modified (N-acetylalanine). Composition is skewed to basic and acidic residues over residues 37–49 (GSRKVPEKGKEPA) and 123–134 (KSKEAYRGRRDG).

Belongs to the myelin basic protein family.

It is found in the myelin membrane. Its function is as follows. This protein may function to maintain proper structure of myelin. This chain is Myelin basic protein (MBP), found in Heterodontus francisci (Horn shark).